The sequence spans 257 residues: Diphthine synthase (257 aa).

S-adenosyl-L-methionine contacts are provided by residues Leu-9, Asp-86, Val-89, Ser-114–Ile-115, Leu-166, Ala-207, and His-232.

This sequence belongs to the diphthine synthase family. Homodimer.

The enzyme catalyses 2-[(3S)-amino-3-carboxypropyl]-L-histidyl-[translation elongation factor 2] + 3 S-adenosyl-L-methionine = diphthine-[translation elongation factor 2] + 3 S-adenosyl-L-homocysteine + 3 H(+). The protein operates within protein modification; peptidyl-diphthamide biosynthesis. S-adenosyl-L-methionine-dependent methyltransferase that catalyzes the trimethylation of the amino group of the modified target histidine residue in translation elongation factor 2 (EF-2), to form an intermediate called diphthine. The three successive methylation reactions represent the second step of diphthamide biosynthesis. The polypeptide is Diphthine synthase (Methanocella arvoryzae (strain DSM 22066 / NBRC 105507 / MRE50)).